A 236-amino-acid chain; its full sequence is Phosphoribosylaminoimidazole-succinocarboxamide synthase (236 aa).

This sequence belongs to the SAICAR synthetase family.

It catalyses the reaction 5-amino-1-(5-phospho-D-ribosyl)imidazole-4-carboxylate + L-aspartate + ATP = (2S)-2-[5-amino-1-(5-phospho-beta-D-ribosyl)imidazole-4-carboxamido]succinate + ADP + phosphate + 2 H(+). It functions in the pathway purine metabolism; IMP biosynthesis via de novo pathway; 5-amino-1-(5-phospho-D-ribosyl)imidazole-4-carboxamide from 5-amino-1-(5-phospho-D-ribosyl)imidazole-4-carboxylate: step 1/2. This is Phosphoribosylaminoimidazole-succinocarboxamide synthase from Rickettsia massiliae (strain Mtu5).